A 460-amino-acid polypeptide reads, in one-letter code: UDP-glycosyltransferase 91C1 (460 aa).

UDP-alpha-D-glucose is bound by residues Thr283, 335–337 (VPQ), 352–360 (HCGWNSVVE), and 374–377 (LNEQ).

The protein belongs to the UDP-glycosyltransferase family.

This chain is UDP-glycosyltransferase 91C1 (UGT91C1), found in Arabidopsis thaliana (Mouse-ear cress).